A 1381-amino-acid polypeptide reads, in one-letter code: Protein HEG homolog 1 (1381 aa).

The N-terminal stretch at 1–29 is a signal peptide; sequence MASPRASRWPPPLLLLLLPLLLLPPAAPG. Residues 24-108 form a disordered region; it reads PPAAPGTRDP…APRGGSADAA (85 aa). The span at 25-37 shows a compositional bias: pro residues; that stretch reads PAAPGTRDPPPSP. Topologically, residues 30–1248 are extracellular; it reads TRDPPPSPAR…GLNCGNPYQL (1219 aa). The segment covering 38–52 has biased composition (low complexity); the sequence is ARRALSLAPLAGAGL. Positions 55 to 74 are enriched in basic and acidic residues; sequence QLERRPEREPPPTPPRERRG. Thr67 carries O-linked (GalNAc...) threonine glycosylation. Residues 93 to 105 are compositionally biased toward low complexity; sequence RGPSGRAPRGGSA. 4 N-linked (GlcNAc...) asparagine glycosylation sites follow: Asn123, Asn159, Asn180, and Asn314. The segment covering 301–316 has biased composition (low complexity); the sequence is DLSSSSESTEKLNNST. 2 disordered regions span residues 301–325 and 376–447; these read DLSS…SVSQ and PSAV…RSVA. A compositionally biased stretch (polar residues) spans 424–444; that stretch reads LASSSEVQNGSPMSQTETVSR. N-linked (GlcNAc...) asparagine glycosylation is found at Asn462, Asn520, and Asn610. The disordered stretch occupies residues 491–529; sequence STVQSGGSHTALGDRSYSESSSTSSSESLNSSAPRGERS. Residues 508–522 show a composition bias toward low complexity; it reads SESSSTSSSESLNSS. Disordered stretches follow at residues 612-680, 706-757, and 774-830; these read SSYD…PLPS, SDAS…PVTS, and QTAD…TLPA. Residues 620–648 are compositionally biased toward polar residues; it reads QPSTESPVLHTSNLPSYTPTINMPNTSVV. 2 stretches are compositionally biased toward low complexity: residues 657–680 and 706–748; these read SDSS…PLPS and SDAS…PVLP. 2 stretches are compositionally biased toward polar residues: residues 774-784 and 792-809; these read QTADLKSQSTP and ESKS…TKAV. Over residues 810–825 the composition is skewed to low complexity; the sequence is TTNSPLPPSLTESSTE. The EGF-like 1 domain occupies 985–1023; the sequence is SVNSCAVNPCLHNGECVADNTSRGYHCRCPPSWQGDDCS. 6 cysteine pairs are disulfide-bonded: Cys989–Cys1000, Cys994–Cys1011, Cys1013–Cys1022, Cys1029–Cys1040, Cys1034–Cys1049, and Cys1051–Cys1062. Residues 1025-1063 enclose the EGF-like 2; calcium-binding domain; that stretch reads DVNECLSNPCPSTAMCNNTQGSFICKCPVGYQLEKGICN. The N-linked (GlcNAc...) asparagine glycan is linked to Asn1137. Residues 1249–1269 form a helical membrane-spanning segment; the sequence is ITVVIAAAGGGLLLILGIALI. Residues 1270–1381 are Cytoplasmic-facing; the sequence is VTCCRKNKND…SDESRRRDYF (112 aa). The residue at position 1359 (Ser1359) is a Phosphoserine.

In terms of assembly, interacts with CCM2 and KRIT1; KRIT1 markedly facilitates interaction with CCM2.

Its subcellular location is the cell membrane. It is found in the cell junction. The protein localises to the secreted. In terms of biological role, receptor component of the CCM signaling pathway which is a crucial regulator of heart and vessel formation and integrity. May act through the stabilization of endothelial cell junctions. This chain is Protein HEG homolog 1 (HEG1), found in Homo sapiens (Human).